A 179-amino-acid chain; its full sequence is Ribosome maturation factor RimM (179 aa).

The PRC barrel domain maps to 100 to 176 (KEEFHLLELI…FLIINPPNGL (77 aa)).

The protein belongs to the RimM family. Binds ribosomal protein uS19.

It is found in the cytoplasm. In terms of biological role, an accessory protein needed during the final step in the assembly of 30S ribosomal subunit, possibly for assembly of the head region. Essential for efficient processing of 16S rRNA. May be needed both before and after RbfA during the maturation of 16S rRNA. It has affinity for free ribosomal 30S subunits but not for 70S ribosomes. The protein is Ribosome maturation factor RimM of Prochlorococcus marinus (strain MIT 9312).